Reading from the N-terminus, the 245-residue chain is MAVQISKKRKFVSDGIFKAELNEFLTRELAEDGYSGVEVRVTPTRTEIIILATRTQNVLGEKGRRIRELTAVVQKRFGFPRGSVELYAEKVATRGLCAIAQAESLRYKLLGGLAVRRACYGVLRFIMESGAKGCEVVVSGKLRGQRAKSMKFVDGLMIHSGDPVNYYVDTAVRHVLLRQGVLGIKVKIMLPWDPSGKIGPKKPLPDHVSIVEPKEEILPTTPVSEQKGAKPEVPVMPQGAPVPTA.

A KH type-2 domain is found at 21–92 (LNEFLTRELA…SVELYAEKVA (72 aa)). The disordered stretch occupies residues 215–245 (EEILPTTPVSEQKGAKPEVPVMPQGAPVPTA).

This sequence belongs to the universal ribosomal protein uS3 family.

The protein resides in the cytoplasm. Its subcellular location is the nucleus. It is found in the nucleolus. The protein localises to the mitochondrion inner membrane. It localises to the cytoskeleton. The protein resides in the spindle. It carries out the reaction 2'-deoxyribonucleotide-(2'-deoxyribose 5'-phosphate)-2'-deoxyribonucleotide-DNA = a 3'-end 2'-deoxyribonucleotide-(2,3-dehydro-2,3-deoxyribose 5'-phosphate)-DNA + a 5'-end 5'-phospho-2'-deoxyribonucleoside-DNA + H(+). Its function is as follows. Component of the small ribosomal subunit. The ribosome is a large ribonucleoprotein complex responsible for the synthesis of proteins in the cell. Has endonuclease activity and plays a role in repair of damaged DNA. Also involved in other processes including regulation of transcription, translation of its cognate mRNA, spindle formation and chromosome movement during mitosis, and apoptosis. The sequence is that of Small ribosomal subunit protein uS3 (rps3) from Ictalurus punctatus (Channel catfish).